Here is a 119-residue protein sequence, read N- to C-terminus: Large ribosomal subunit protein bL20 (119 aa).

Belongs to the bacterial ribosomal protein bL20 family.

Functionally, binds directly to 23S ribosomal RNA and is necessary for the in vitro assembly process of the 50S ribosomal subunit. It is not involved in the protein synthesizing functions of that subunit. This Halorhodospira halophila (strain DSM 244 / SL1) (Ectothiorhodospira halophila (strain DSM 244 / SL1)) protein is Large ribosomal subunit protein bL20.